An 89-amino-acid polypeptide reads, in one-letter code: Large ribosomal subunit protein uL24 (89 aa).

The protein belongs to the universal ribosomal protein uL24 family. As to quaternary structure, part of the 50S ribosomal subunit.

Functionally, one of two assembly initiator proteins, it binds directly to the 5'-end of the 23S rRNA, where it nucleates assembly of the 50S subunit. In terms of biological role, one of the proteins that surrounds the polypeptide exit tunnel on the outside of the subunit. The polypeptide is Large ribosomal subunit protein uL24 (Chlorobium chlorochromatii (strain CaD3)).